Here is a 408-residue protein sequence, read N- to C-terminus: Multidrug resistance protein MdtG (408 aa).

11 helical membrane-spanning segments follow: residues 16 to 36 (LIVA…VMPF), 58 to 78 (IVFS…GGLA), 92 to 112 (LGMG…QFLI), 115 to 135 (ALLG…ATQV), 146 to 166 (TLST…GLLA), 173 to 193 (PVFF…LFCI), 224 to 244 (LFVT…ILTL), 256 to 276 (VAFI…LSAP), 290 to 310 (ILIT…YVQT), 319 to 339 (FLLG…LVYN), and 378 to 398 (AVFL…WNSL).

The protein belongs to the major facilitator superfamily. DHA1 family. MdtG (TC 2.A.1.2.20) subfamily.

It is found in the cell inner membrane. Its function is as follows. Confers resistance to fosfomycin and deoxycholate. This Escherichia coli O139:H28 (strain E24377A / ETEC) protein is Multidrug resistance protein MdtG.